Reading from the N-terminus, the 122-residue chain is MIQTESRLEVADNTGAREVLCIKVLGGSKRRYASVGDIIKVTVKDAAPRGRVKKGDIYNAVVVRTAKGVRRADGSLVKFDGNAAVLLNNKLEPIGTRIFGPVTRELRTERFMKIVSLAPEVL.

This sequence belongs to the universal ribosomal protein uL14 family. As to quaternary structure, part of the 50S ribosomal subunit. Forms a cluster with proteins L3 and L19. In the 70S ribosome, L14 and L19 interact and together make contacts with the 16S rRNA in bridges B5 and B8.

Functionally, binds to 23S rRNA. Forms part of two intersubunit bridges in the 70S ribosome. This is Large ribosomal subunit protein uL14 from Cupriavidus metallidurans (strain ATCC 43123 / DSM 2839 / NBRC 102507 / CH34) (Ralstonia metallidurans).